Reading from the N-terminus, the 259-residue chain is UPF0758 protein Bphyt_3148 (259 aa).

Residues 137 to 259 (LLNSPEAVEN…VYSFARAGWP (123 aa)) enclose the MPN domain. H208, H210, and D221 together coordinate Zn(2+). A JAMM motif motif is present at residues 208-221 (HNHPSGAVQPSASD).

Belongs to the UPF0758 family.

The sequence is that of UPF0758 protein Bphyt_3148 from Paraburkholderia phytofirmans (strain DSM 17436 / LMG 22146 / PsJN) (Burkholderia phytofirmans).